The chain runs to 363 residues: Sensor protein BasS (363 aa).

Topologically, residues 1-13 are cytoplasmic; the sequence is MHFLRRPISLRQR. The helical transmembrane segment at 14–34 threads the bilayer; it reads LILTIGAILLVFELISVFWLW. Residues 35–64 lie on the Periplasmic side of the membrane; sequence HESTEQIQLFEQALRDNRNNDRHIMREIRE. Residues 65–88 traverse the membrane as a helical segment; it reads AVASLIVPGVFMVSLTLFICYQAV. In terms of domain architecture, HAMP spans 89 to 141; the sequence is RRITRPLAELQKELEARTADNLTPIAIHSATLEIEAVVSALNDLVSRLTSTLD. At 89-363 the chain is on the cytoplasmic side; it reads RRITRPLAEL…KKDQYVANQI (275 aa). In terms of domain architecture, Histidine kinase spans 149–357; the sequence is DVAHELRTPL…RAWVRLKKDQ (209 aa). H152 is modified (phosphohistidine; by autocatalysis).

Autophosphorylated.

The protein localises to the cell inner membrane. The catalysed reaction is ATP + protein L-histidine = ADP + protein N-phospho-L-histidine.. Its function is as follows. Member of the two-component regulatory system BasS/BasR Autophosphorylates and activates BasR by phosphorylation. The protein is Sensor protein BasS (basS) of Escherichia coli (strain K12).